A 301-amino-acid polypeptide reads, in one-letter code: Porin (301 aa).

As to quaternary structure, homotrimer.

The protein localises to the cell outer membrane. Forms channels that allow the passive diffusion of small hydrophilic solutes up to an exclusion limit of about 0.6 kDa. The polypeptide is Porin (Rhodobacter capsulatus (Rhodopseudomonas capsulata)).